We begin with the raw amino-acid sequence, 415 residues long: Histidine--tRNA ligase (415 aa).

This sequence belongs to the class-II aminoacyl-tRNA synthetase family. As to quaternary structure, homodimer.

The protein localises to the cytoplasm. The enzyme catalyses tRNA(His) + L-histidine + ATP = L-histidyl-tRNA(His) + AMP + diphosphate + H(+). The chain is Histidine--tRNA ligase from Clostridium perfringens (strain SM101 / Type A).